The primary structure comprises 182 residues: Peptidoglycan-recognition protein SB2 (182 aa).

The first 17 residues, 1 to 17, serve as a signal peptide directing secretion; sequence MKLQLALVLCGLTLALG. The N-acetylmuramoyl-L-alanine amidase domain maps to 40–165; the sequence is PVRLIIIHHT…CQTKATACPG (126 aa). H47 serves as a coordination point for Zn(2+). A disulfide bond links C54 and C60. N-linked (GlcNAc...) asparagine glycosylation is present at N149. Residues H155 and C163 each contribute to the Zn(2+) site.

The protein belongs to the N-acetylmuramoyl-L-alanine amidase 2 family. Requires Zn(2+) as cofactor.

The protein resides in the secreted. It catalyses the reaction Hydrolyzes the link between N-acetylmuramoyl residues and L-amino acid residues in certain cell-wall glycopeptides.. Functionally, N-acetylmuramyl-L-alanine amidase involved in innate immunity by degrading bacterial peptidoglycans (PGN). Probably plays a scavenger role by digesting biologically active PGN into biologically inactive fragments. Has no direct bacteriolytic activity. The sequence is that of Peptidoglycan-recognition protein SB2 (PGRP-SB2) from Drosophila simulans (Fruit fly).